We begin with the raw amino-acid sequence, 299 residues long: Probable lipid kinase YegS-like (299 aa).

Positions 1–129 (MSERKALLIL…IDLGEVGGQM (129 aa)) constitute a DAGKc domain. ATP-binding positions include threonine 39, 65–71 (GDGTLRD), and threonine 92. Mg(2+) contacts are provided by leucine 210, aspartate 213, and leucine 215. The active-site Proton acceptor is the glutamate 268.

The protein belongs to the diacylglycerol/lipid kinase family. YegS lipid kinase subfamily. Mg(2+) is required as a cofactor. Requires Ca(2+) as cofactor.

The protein resides in the cytoplasm. Its function is as follows. Probably phosphorylates lipids; the in vivo substrate is unknown. This is Probable lipid kinase YegS-like from Pseudomonas fluorescens (strain ATCC BAA-477 / NRRL B-23932 / Pf-5).